Reading from the N-terminus, the 182-residue chain is Urease accessory protein UreE (182 aa).

The disordered stretch occupies residues 128 to 182 (PRTEPFRPEGGAYGHGRTLGHDHGPAQGHGHDHPHVHVHISHKPDEDETPDADPA). Basic and acidic residues predominate over residues 146–162 (LGHDHGPAQGHGHDHPH). The span at 173–182 (EDETPDADPA) shows a compositional bias: acidic residues.

Belongs to the UreE family.

It is found in the cytoplasm. Involved in urease metallocenter assembly. Binds nickel. Probably functions as a nickel donor during metallocenter assembly. The chain is Urease accessory protein UreE from Cereibacter sphaeroides (strain ATCC 17023 / DSM 158 / JCM 6121 / CCUG 31486 / LMG 2827 / NBRC 12203 / NCIMB 8253 / ATH 2.4.1.) (Rhodobacter sphaeroides).